The following is a 355-amino-acid chain: Small ribosomal subunit biogenesis GTPase RsgA 1 (355 aa).

The 160-residue stretch at 103–262 (GRVADRQAIA…LIDTPGVREF (160 aa)) folds into the CP-type G domain. GTP contacts are provided by residues 152 to 155 (NKAD) and 204 to 212 (GSSGVGKSS). 4 residues coordinate Zn(2+): Cys285, Cys290, His292, and Cys298.

This sequence belongs to the TRAFAC class YlqF/YawG GTPase family. RsgA subfamily. As to quaternary structure, monomer. Associates with 30S ribosomal subunit, binds 16S rRNA. Requires Zn(2+) as cofactor.

Its subcellular location is the cytoplasm. Its function is as follows. One of several proteins that assist in the late maturation steps of the functional core of the 30S ribosomal subunit. Helps release RbfA from mature subunits. May play a role in the assembly of ribosomal proteins into the subunit. Circularly permuted GTPase that catalyzes slow GTP hydrolysis, GTPase activity is stimulated by the 30S ribosomal subunit. This chain is Small ribosomal subunit biogenesis GTPase RsgA 1, found in Bacteroides thetaiotaomicron (strain ATCC 29148 / DSM 2079 / JCM 5827 / CCUG 10774 / NCTC 10582 / VPI-5482 / E50).